Here is a 201-residue protein sequence, read N- to C-terminus: Glycerol-3-phosphate acyltransferase (201 aa).

6 helical membrane-spanning segments follow: residues 10–30 (MLIG…GLIL), 60–80 (LAAA…LIAA), 86–106 (AAIA…WIGF), 116–136 (LGVL…AWIV), 139–159 (LLTR…PIAL), and 166–186 (ALAA…RANI).

Belongs to the PlsY family. As to quaternary structure, probably interacts with PlsX.

Its subcellular location is the cell inner membrane. The enzyme catalyses an acyl phosphate + sn-glycerol 3-phosphate = a 1-acyl-sn-glycero-3-phosphate + phosphate. It participates in lipid metabolism; phospholipid metabolism. Functionally, catalyzes the transfer of an acyl group from acyl-phosphate (acyl-PO(4)) to glycerol-3-phosphate (G3P) to form lysophosphatidic acid (LPA). This enzyme utilizes acyl-phosphate as fatty acyl donor, but not acyl-CoA or acyl-ACP. In Brucella ovis (strain ATCC 25840 / 63/290 / NCTC 10512), this protein is Glycerol-3-phosphate acyltransferase.